The sequence spans 340 residues: Biotin synthase (340 aa).

Residues 1–21 (MDAASVSFGSGHDLSSQPRHD) form a disordered region. Positions 53–272 (NHVETANLLS…IAVARIMMPR (220 aa)) constitute a Radical SAM core domain. Positions 68, 72, and 75 each coordinate [4Fe-4S] cluster. Residues C112, C143, C203, and R276 each contribute to the [2Fe-2S] cluster site.

This sequence belongs to the radical SAM superfamily. Biotin synthase family. In terms of assembly, homodimer. The cofactor is [4Fe-4S] cluster. [2Fe-2S] cluster is required as a cofactor.

It carries out the reaction (4R,5S)-dethiobiotin + (sulfur carrier)-SH + 2 reduced [2Fe-2S]-[ferredoxin] + 2 S-adenosyl-L-methionine = (sulfur carrier)-H + biotin + 2 5'-deoxyadenosine + 2 L-methionine + 2 oxidized [2Fe-2S]-[ferredoxin]. It participates in cofactor biosynthesis; biotin biosynthesis; biotin from 7,8-diaminononanoate: step 2/2. Its function is as follows. Catalyzes the conversion of dethiobiotin (DTB) to biotin by the insertion of a sulfur atom into dethiobiotin via a radical-based mechanism. This chain is Biotin synthase, found in Nitrobacter hamburgensis (strain DSM 10229 / NCIMB 13809 / X14).